The primary structure comprises 931 residues: MSASTHSHKRKNSHLFPQRKSSNSSMDKPFFPNNDSVANTDPQSNENGHTINEIRPTEATIDVTDVPQTPFLQEQYSMRPRRESFQFNDIENQHHTHSFFSVNKFNRRWGEWSLPEKRSYVLVFTLIALSVLVLLVILIPSKLLPTKITRPKTSAGDSSLGKRSFSIENVLNGDFAIPEDTFHFIDPPQRLLGQDSDPGLYFTTKEIDGHTNFIAKQLFDETFEVNLGGNRFLYEGVEFTVSTVQINYKLDKLIFGTNLESEFRHSSKGFYWIKDLNTGNIEPILPPEKSDDNYELGLSKLSYAHFSPAYNYIYFVYENNLFLQQVNSGVAKKVTEDGSKDIFNAKPDWIYEEEVLASDQAIWWAPDDSKAVFARFNDTSVDDIRLNRYTNMNEAYLSDTKIKYPKPGFQNPQFDLFLVNLQNGIIYSINTGGQKDSILYNGKWISPDTFRFEITDRNSKILDVKVYDIPSSQMLTVRNTNSNLFNGWIEKTKDILSIPPKPELKRMDYGYIDIHADSRGFSHLFYYPTVFAKEPIQLTKGNWEVTGNGIVGYEYETDTIFFTANEIGVMSQHLYSISLTDSTTQNTFQSLQNPSDKYDFYDFELSSSARYAISKKLGPDTPIKVAGPLTRVLNVAEIHDDSILQLTKDEKFKEKIKNYDLPITSYKTMVLDDGVEINYIEIKPANLNPKKKYPILVNIYGGPGSQTFTTKSSLAFEQAVVSGLDVIVLQIEPRGTGGKGWSFRSWAREKLGYWEPRDITEVTKKFIQRNSQHIDESKIAIWGWSYGGFTSLKTVELDNGDTFKYAMAVAPVTNWTLYDSVYTERYMNQPSENHEGYFEVSTIQNFKSFESLKRLFIVHGTFDDNVHIQNTFRLVDQLNLLGLTNYDMHIFPDSDHSIRYHNAQRIVFQKLYYWLRDAFAERFDNTEVLHL.

The segment covering 1–13 (MSASTHSHKRKNS) has biased composition (basic residues). The disordered stretch occupies residues 1–58 (MSASTHSHKRKNSHLFPQRKSSNSSMDKPFFPNNDSVANTDPQSNENGHTINEIRPTE). The Cytoplasmic segment spans residues 1–119 (MSASTHSHKR…GEWSLPEKRS (119 aa)). A compositionally biased stretch (polar residues) spans 33–50 (NNDSVANTDPQSNENGHT). A helical; Signal-anchor for type II membrane protein transmembrane segment spans residues 120 to 140 (YVLVFTLIALSVLVLLVILIP). At 141-931 (SKLLPTKITR…RFDNTEVLHL (791 aa)) the chain is on the lumenal side. A glycan (N-linked (GlcNAc...) asparagine) is linked at Asn377. Ser785 (charge relay system) is an active-site residue. N-linked (GlcNAc...) asparagine glycosylation occurs at Asn814. Active-site charge relay system residues include Asp863 and His896.

The protein belongs to the peptidase S9B family.

The protein localises to the vacuole membrane. Functionally, responsible for the proteolytic maturation of the alpha-factor precursor. The sequence is that of Dipeptidyl aminopeptidase A (STE13) from Saccharomyces cerevisiae (strain ATCC 204508 / S288c) (Baker's yeast).